Reading from the N-terminus, the 313-residue chain is PDZ domain-containing protein GIPC2 (313 aa).

Positions 14-27 (KETSRLVEGEHTDA) are enriched in basic and acidic residues. Residues 14–34 (KETSRLVEGEHTDAAVRSLPS) are disordered. Positions 117-197 (EVNVYKSEDS…EELFTLTLIE (81 aa)) constitute a PDZ domain.

Belongs to the GIPC family. As to quaternary structure, probably interacts with SEMA5A.

The protein localises to the cytoplasm. In Bos taurus (Bovine), this protein is PDZ domain-containing protein GIPC2 (GIPC2).